Here is a 172-residue protein sequence, read N- to C-terminus: Transcriptional repressor NrdR (172 aa).

Residues 3–34 (CPFCGEADTKVIDSRLVAEGDQVRRRRECLSC) fold into a zinc finger. One can recognise an ATP-cone domain in the interval 49 to 139 (PRVVKQDGTR…VYRSFQDINE (91 aa)).

The protein belongs to the NrdR family. Zn(2+) serves as cofactor.

In terms of biological role, negatively regulates transcription of bacterial ribonucleotide reductase nrd genes and operons by binding to NrdR-boxes. The protein is Transcriptional repressor NrdR of Marinobacter nauticus (strain ATCC 700491 / DSM 11845 / VT8) (Marinobacter aquaeolei).